A 333-amino-acid chain; its full sequence is MVNQHTAHQLPFASQPPLASAQLAPTLISLDDWALATMVGPDTVKYLQGQVTADVSALADDRHILCAHCDAKGKMWSNLRLFHHGEGFAFIERRNLRDAQLSELKKYAVFSKTTIAPDDNAVLLGAAGAGIRELLASAFSQLPDADHPVVQHEGATLLHFAHPAERFLLVLSPEQSASLLEQLGDKVSLNDSRQWLTLDIEAGQPIIDSANSAQFIPQATNLQALNGISFSKGCYTGQEMVARAKYRGANKRALYWLAGKANQVPQAGDDLELQLGENWRRTGTVLAASQLQNGEVWVQAVLNNDLTAENVLRVREDADSQITVQPLPYEITD.

Positions 33 and 195 each coordinate folate.

It belongs to the tRNA-modifying YgfZ family.

Its subcellular location is the cytoplasm. Its function is as follows. Folate-binding protein involved in regulating the level of ATP-DnaA and in the modification of some tRNAs. It is probably a key factor in regulatory networks that act via tRNA modification, such as initiation of chromosomal replication. The chain is tRNA-modifying protein YgfZ from Pectobacterium carotovorum subsp. carotovorum (strain PC1).